We begin with the raw amino-acid sequence, 126 residues long: UPF0102 protein Mlg_2205 (126 aa).

The protein belongs to the UPF0102 family.

The polypeptide is UPF0102 protein Mlg_2205 (Alkalilimnicola ehrlichii (strain ATCC BAA-1101 / DSM 17681 / MLHE-1)).